The sequence spans 501 residues: YVRPVSSWKVAVFEHQVIPPKTDMETREEALDALKLNSDVYHEAVLESRSKGVKMIVFPEYGLYDINTLTRTRMDLMAEKVPHPKHGHRNPCDEPEYQTQSSEMLRTFSCMAKENDMYMVVNMAGREPCRRATEPECPGDKQLLYNTNVAFNNEGDVVARYYKTHLFWEEGWFNSSKNYEMALWDTPIGKFGTFMCFDFQAVQLIEQYNVRHIAYPASWVNLPPIYQSIQSHSAFARFAKINLLAASVHRLETSTYGSGIYSPNGAEIFYFRPDIPKSKLLVAEILPIHVKKPEQTVVNFDNPVFPSEDDDVQDLFDRGDFAFLKYKRMTTRAGTVEVCQKSFCCKARYAVKDRFKEVYAVGVYDGLLSAGANNLYFQICTVIQCPHKKCGLKISKVRTHFKYLNLRADGWLDRYVFPSYTVMYNNYIALDPFVWNYTEAGGIETKPGTSTPLHSANLVARIYAKDSSKHVHQSHPIDEGVIKMAVKYMLYVMAAYVYAAS.

The CN hydrolase domain occupies 20-287 (PKTDMETREE…SKLLVAEILP (268 aa)). The active-site Proton acceptor is the Glu60. Lys163 serves as the catalytic Proton donor. Cys196 (nucleophile) is an active-site residue. Residue Cys390 is modified to S-(coelenterazin-3a-yl)cysteine.

The protein belongs to the carbon-nitrogen hydrolase superfamily. BTD/VNN family. In terms of tissue distribution, photogenic gland (at protein level).

Functionally, monovalent ion-dependent bioluminescence photoprotein. Displays an emission peak at 470 nm (blue light). Trace amounts of monovalent ion trigger the intramolecular oxidation of the chromophore, didehydrocoelenterazine, with the emission of light. This chain is Symplectin, found in Sthenoteuthis oualaniensis (Purpleback flying squid).